Consider the following 660-residue polypeptide: Septation initiation protein sid4 (660 aa).

3 disordered regions span residues 79-243, 368-396, and 459-503; these read TKKE…QQHF, STTV…PDTK, and RHTS…PAKN. Polar residues-rich tracts occupy residues 125–138, 156–176, and 222–243; these read SFNS…STPY, SNSP…QSPK, and RPNQ…QQHF. Residues 384–396 are compositionally biased toward basic and acidic residues; that stretch reads STKDFKEQKPDTK. 2 stretches are compositionally biased toward polar residues: residues 459 to 480 and 488 to 497; these read RHTS…ITTK and KENTMLNDGS.

Homodimer. Interacts with cdc11, sad1, plo1 and dma1.

Its subcellular location is the cytoplasm. The protein resides in the cytoskeleton. The protein localises to the microtubule organizing center. It localises to the spindle pole body. Functionally, required for activation of the spg1 GTPase signaling cascade which leads to the initiation of septation and the subsequent termination of mitosis. May act as a scaffold at the spindle pole body to which other components of the spg1 signaling cascade attach. The chain is Septation initiation protein sid4 (sid4) from Schizosaccharomyces pombe (strain 972 / ATCC 24843) (Fission yeast).